A 443-amino-acid chain; its full sequence is Ribulose bisphosphate carboxylase large chain (443 aa).

The residue at position 7 (lysine 7) is an N6,N6,N6-trimethyllysine. Positions 116 and 166 each coordinate substrate. The active-site Proton acceptor is the lysine 168. Lysine 170 provides a ligand contact to substrate. Residues lysine 194, aspartate 196, and glutamate 197 each contribute to the Mg(2+) site. Lysine 194 carries the N6-carboxylysine modification. Histidine 287 (proton acceptor) is an active-site residue. Positions 288, 320, and 372 each coordinate substrate.

The protein belongs to the RuBisCO large chain family. Type I subfamily. In terms of assembly, heterohexadecamer of 8 large chains and 8 small chains; disulfide-linked. The disulfide link is formed within the large subunit homodimers. Requires Mg(2+) as cofactor. In terms of processing, the disulfide bond which can form in the large chain dimeric partners within the hexadecamer appears to be associated with oxidative stress and protein turnover.

The protein resides in the plastid. It localises to the chloroplast. It carries out the reaction 2 (2R)-3-phosphoglycerate + 2 H(+) = D-ribulose 1,5-bisphosphate + CO2 + H2O. The catalysed reaction is D-ribulose 1,5-bisphosphate + O2 = 2-phosphoglycolate + (2R)-3-phosphoglycerate + 2 H(+). Functionally, ruBisCO catalyzes two reactions: the carboxylation of D-ribulose 1,5-bisphosphate, the primary event in carbon dioxide fixation, as well as the oxidative fragmentation of the pentose substrate in the photorespiration process. Both reactions occur simultaneously and in competition at the same active site. The polypeptide is Ribulose bisphosphate carboxylase large chain (Abies sachalinensis (Sakhalin fir)).